An 861-amino-acid chain; its full sequence is Ataxin-7-like protein 1 (861 aa).

Disordered stretches follow at residues 1 to 31 (MTSE…AMAT), 154 to 189 (GHHS…KGSR), 342 to 448 (KSRE…GADE), 606 to 673 (PIPA…LSGP), and 772 to 861 (FDKS…RTLP). Residues 284–351 (RRLSEREFDP…KSREKEVKDK (68 aa)) form the SCA7 domain. Residues 342-354 (KSREKEVKDKEHL) are compositionally biased toward basic and acidic residues. A compositionally biased stretch (polar residues) spans 355 to 369 (LTSTREILPSQSGPA). Low complexity-rich tracts occupy residues 372–381 (SLLGSSGSSG), 403–417 (SSAN…SNHS), and 606–616 (PIPAVIPSPSH). Residues 617 to 627 (KPSKTKTSKSS) are compositionally biased toward basic residues. Basic and acidic residues predominate over residues 628–641 (KVKDLSTRSDESPS). Composition is skewed to low complexity over residues 648 to 671 (QSST…SPLS) and 783 to 794 (SSSSSKACKITK). The span at 817 to 828 (VNSTSSRQVGKN) shows a compositional bias: polar residues. Over residues 829-847 (SSLALSQSSPSSISSPGHS) the composition is skewed to low complexity.

This chain is Ataxin-7-like protein 1 (ATXN7L1), found in Homo sapiens (Human).